Here is a 265-residue protein sequence, read N- to C-terminus: U6 snRNA phosphodiesterase 1 (265 aa).

A disordered region spans residues 1–67; the sequence is MSAAPLVGYS…EGPVDDSAKH (67 aa). A compositionally biased stretch (basic and acidic residues) spans 20–32; that stretch reads AGARVRPGAEGRS. His-120 acts as the Proton acceptor in catalysis. 120 to 122 lines the AMP pocket; it reads HLS. Residues Gln-164, Tyr-202, and 206 to 210 contribute to the UMP site; that span reads SFHIS. Residues Tyr-202 and 204 to 210 contribute to the AMP site; that span reads DPSFHIS. His-208 serves as the catalytic Proton donor.

This sequence belongs to the 2H phosphoesterase superfamily. USB1 family. As to quaternary structure, interacts with PLRG1, CDC5L and PRPF19.

Its subcellular location is the nucleus. The enzyme catalyses a 3'-end uridylyl-uridine-RNA = a 3'-end 2',3'-cyclophospho-uridine-RNA + uridine. It catalyses the reaction a 3'-end uridylyl-adenosine-RNA = a 3'-end 2',3'-cyclophospho-uridine-RNA + adenosine. Its function is as follows. 3'-5' RNA exonuclease that trims the 3' end of oligo(U) and oligo(A) tracts of the pre-U6 small nuclear RNA (snRNA) molecule, leading to the formation of a mature U6 snRNA 3' end-terminated with a 2',3'-cyclic phosphate. Participates in the U6 snRNA 3' end processing that prevents U6 snRNA degradation. In addition also removes uridines from the 3' end of U6atac snRNA and possibly the vault RNA VTRNA1-1. The polypeptide is U6 snRNA phosphodiesterase 1 (Bos taurus (Bovine)).